The primary structure comprises 521 residues: MKRGKKNSDAGDRLTNSDTRTGSSELNAMMKPSLSSMKTMGLLLAVLMVASVMFSLSVVLRDPPSDDVIETEAASRVLQSRLHQDGGLSEKKAQLGNINLVPSFDKESCLSRYEASLYRKESPFKQSSYLDYRLQRYEDLHRRCGPFTRSYNLTLDKLKSGDRSDGEVSGCRYVIWLNSNGDLGNRMLSLASAFLYALLTNRFLLVELGVDMADLFCEPFPNTTWFLPPEFPLNSHFNEQSLLRNSGNPMVAYRHVVRDSSDQQKLFFCEDSQVLLEETPWLILKADSFFLPSLFSVSSFKQELQMLFPEKDTAFHFLSQYLFHPTNVVWGLITRYYNAYLAKADQRIGIYIGVSESGNEQFQHLIDQILACGTRHKLLPEVDKQRNLPSSQVLNRKSKAVFISSSSPGYFKSIRDVYWENPTVMGEIISVHKPSYKDYQKTPRNMESKRAWAEIYLLSCSDALVVTGLWSSLVEVAHGLGGLKPWVLNKAENGTAHEPYCVKARSIEPCSQATLFHGCKD.

A compositionally biased stretch (basic and acidic residues) spans 1–12 (MKRGKKNSDAGD). Residues 1–29 (MKRGKKNSDAGDRLTNSDTRTGSSELNAM) form a disordered region. The Cytoplasmic segment spans residues 1–39 (MKRGKKNSDAGDRLTNSDTRTGSSELNAMMKPSLSSMKT). Over residues 14–26 (LTNSDTRTGSSEL) the composition is skewed to polar residues. The helical; Signal-anchor for type II membrane protein transmembrane segment at 40–60 (MGLLLAVLMVASVMFSLSVVL) threads the bilayer. At 61-521 (RDPPSDDVIE…QATLFHGCKD (461 aa)) the chain is on the lumenal side. Residues Asn152, Asn222, and Asn493 are each glycosylated (N-linked (GlcNAc...) asparagine).

It belongs to the glycosyltransferase 37 family. Expressed in roots, stems, leaves, flowers, siliques and seedlings.

The protein resides in the golgi apparatus. Its subcellular location is the golgi stack membrane. The protein operates within protein modification; protein glycosylation. In terms of biological role, may be involved in cell wall biosynthesis. May act as a fucosyltransferase. In Arabidopsis thaliana (Mouse-ear cress), this protein is Fucosyltransferase 3 (FUT3).